Consider the following 750-residue polypeptide: MAKASETERSGPGTQPADAQTATSATVRPLSTQAVFRPDFGDEDNFPHPTLGPDTEPQDRMATTSRVRPPVRRLGGGLVEIPRAPDIDPLEALMTNPVVPESKRFCWNCGRPVGRSDSETKGASEGWCPYCGSPYSFLPQLNPGDIVAGQYEVKGCIAHGGLGWIYLALDRNVNGRPVVLKGLVHSGDAEAQAMAMAERQFLAEVVHPSIVQIFNFVEHTDRHGDPVGYIVMEYVGGQSLKRSKGQKLPVAEAIAYLLEILPALSYLHSIGLVYNDLKPENIMLTEEQLKLIDLGAVSRINSFGYLYGTPGFQAPEIVRTGPTVATDIYTVGRTLAALTLDLPTRNGRYVDGLPEDDPVLKTYDSYGRLLRRAIDPDPRQRFTTAEEMSAQLTGVLREVVAQDTGVPRPGLSTIFSPSRSTFGVDLLVAHTDVYLDGQVHAEKLTANEIVTALSVPLVDPTDVAASVLQATVLSQPVQTLDSLRAARHGALDADGVDFSESVELPLMEVRALLDLGDVAKATRKLDDLAERVGWRWRLVWYRAVAELLTGDYDSATKHFTEVLDTFPGELAPKLALAATAELAGNTDEHKFYQTVWSTNDGVISAAFGLARARSAEGDRVGAVRTLDEVPPTSRHFTTARLTSAVTLLSGRSTSEVTEEQIRDAARRVEALPPTEPRVLQIRALVLGGALDWLKDNKASTNHILGFPFTSHGLRLGVEASLRSLARVAPTQRHRYTLVDMANKVRPTSTF.

The segment at 1-66 is disordered; sequence MAKASETERS…PQDRMATTSR (66 aa). The span at 17–34 shows a compositional bias: polar residues; that stretch reads ADAQTATSATVRPLSTQA. The Protein kinase domain maps to 151–396; sequence YEVKGCIAHG…EMSAQLTGVL (246 aa). ATP is bound by residues 157 to 165 and lysine 181; that span reads IAHGGLGWI. The active-site Proton acceptor is the aspartate 276.

Belongs to the protein kinase superfamily. Ser/Thr protein kinase family. In terms of processing, autophosphorylated.

It carries out the reaction L-seryl-[protein] + ATP = O-phospho-L-seryl-[protein] + ADP + H(+). The enzyme catalyses L-threonyl-[protein] + ATP = O-phospho-L-threonyl-[protein] + ADP + H(+). The chain is Serine/threonine-protein kinase PknG (pknG) from Mycobacterium bovis (strain ATCC BAA-935 / AF2122/97).